Reading from the N-terminus, the 126-residue chain is Small ribosomal subunit protein uS12 (126 aa).

D89 bears the 3-methylthioaspartic acid mark. A disordered region spans residues 99-126 (RGSLDTSGVNDRKQGRSKYGTKKPKDKK). Positions 113–126 (GRSKYGTKKPKDKK) are enriched in basic residues.

It belongs to the universal ribosomal protein uS12 family. In terms of assembly, part of the 30S ribosomal subunit. Contacts proteins S8 and S17. May interact with IF1 in the 30S initiation complex.

Its function is as follows. With S4 and S5 plays an important role in translational accuracy. In terms of biological role, interacts with and stabilizes bases of the 16S rRNA that are involved in tRNA selection in the A site and with the mRNA backbone. Located at the interface of the 30S and 50S subunits, it traverses the body of the 30S subunit contacting proteins on the other side and probably holding the rRNA structure together. The combined cluster of proteins S8, S12 and S17 appears to hold together the shoulder and platform of the 30S subunit. This is Small ribosomal subunit protein uS12 from Legionella pneumophila (strain Paris).